A 250-amino-acid polypeptide reads, in one-letter code: MEDINFASLAPRHGSRPFMGNWQDIGTSNMSGGAFSWGSLWSGIKNFGSTIKNYGSKAWNSSTGQMLRDKLKEQNFQQKVVDGLASGISGVVDLANQAVQNKINSKLDPRPPVEEPPPAVETVSPEGRGEKRPRPDREETLVTQIDEPPSYEEALKQGLPTTRPIAPMATGVLGQHTPVTLDLPPPADTQQKPVLPGPSAVVVTRPSRASLRRAASGPRSMRPVASGNWQSTLNSIVGLGVQSLKRRRCF.

The propeptide occupies Met-1–Gly-33. Residues Ala-34–Tyr-54 form an amphipathic alpha-helix essential for membrane lytic activity region. The tract at residues Ser-36–Asn-53 is involved in endosomal membrane lysis. The interaction with hexon protein stretch occupies residues Gly-48–Gln-74. The short motif at Leu-67–Phe-76 is the Nuclear export signal element. The tract at residues Ile-103–Glu-147 is disordered. The residue at position 124 (Ser-124) is a Phosphoserine; by host. Positions Gly-127 to Thr-140 are enriched in basic and acidic residues. The Nuclear localization signal motif lies at Lys-131–Pro-135. Position 143 is a phosphothreonine; by host (Thr-143). The PPXY motif motif lies at Pro-148–Tyr-151. The span at Pro-206 to Ser-220 shows a compositional bias: low complexity. The disordered stretch occupies residues Pro-206–Ser-226. Residues Ser-231 to Gln-242 carry the Nuclear export signal motif. The segment at Leu-233 to Leu-239 is interaction with hexon protein. Positions Gly-240 to Phe-250 are binds to importin alpha/beta, involved in hexon nuclear import. The short motif at Lys-245–Arg-248 is the Nuclear localization signal element.

It belongs to the adenoviridae protein VI family. Interacts with hexon protein; this interaction allows nuclear import of hexon trimers and possibly pre-capsid assembly. Interacts (via C-terminal NLS) with importin alpha/beta. As to quaternary structure, interacts (via PPxY motif) with host NEDD4 ubiquitine ligase; this interaction might play a role in virus intracellular transport during entry. Part of a complex composed of the core-capsid bridging protein, the endosome lysis protein VI and the hexon-linking protein VIII; these interactions bridge the virus core to the capsid. Interacts with peripentonal hexons; this interaction stabilizes the capsid by gluing two peripentonal hexons together and joining them with an adjacent group-of-nine hexon. In terms of assembly, heterodimer with the viral protease; disulfide-linked. Interacts with the viral protease. Ubiquitinated by Nedd4 following partial capsid disassembly; which might play a role in intracellular virus movement during entry. In terms of processing, contains the major nuclear import and export signals. Proteolytically removed during virion maturation. The processing of the C-terminus turns the precursor into a mature viral structural protein and abrogates its ability to promote hexon import and act as a potential chaperone protein.

Its subcellular location is the host nucleus. It localises to the host cytoplasm. The protein resides in the virion. In terms of biological role, during virus assembly, promotes hexon trimers nuclear import through nuclear pore complexes via an importin alpha/beta-dependent mechanism. By analogy to herpesviruses capsid assembly, might act as a chaperone to promote the formation of the icosahedral capsid. Its function is as follows. Structural component of the virion that provides increased stability to the particle shell through its interaction with the core-capsid bridging protein and the hexon-linking protein VIII. Fibers shedding during virus entry into host cell allows the endosome lysis protein to be exposed as a membrane-lytic peptide. Exhibits pH-independent membrane fragmentation activity and probably mediates viral rapid escape from host endosome via organellar membrane lysis. It is not clear if it then remains partially associated with the capsid and involved in the intracellular microtubule-dependent transport of capsid to the nucleus, or if it is lost during endosomal penetration. Cofactor that activates the viral protease. Binds to viral protease in a 1:1 ratio. This is Pre-protein VI from Human adenovirus C serotype 2 (HAdV-2).